The chain runs to 614 residues: Putative N(6)-adenosine-methyltransferase MT-A70-like (614 aa).

Positions 59-78 (TPPLTNFNPPKSSSLQQLPQ) are disordered. Low complexity predominate over residues 67–78 (PPKSSSLQQLPQ). S-adenosyl-L-methionine-binding positions include 391–392 (DI) and Asp409. A positively charged region required for RNA-binding region spans residues 479–492 (RIIRTGRTGHWLNH). S-adenosyl-L-methionine is bound by residues Lys526, 549-552 (RMHN), and 562-563 (NQ). Positions 589-614 (PASPSRASAMELDSSVAAQTTTSAMM) are disordered. Over residues 604–614 (VAAQTTTSAMM) the composition is skewed to polar residues.

It belongs to the MT-A70-like family.

The protein localises to the nucleus. It catalyses the reaction an adenosine in mRNA + S-adenosyl-L-methionine = an N(6)-methyladenosine in mRNA + S-adenosyl-L-homocysteine + H(+). Putative N6-methyltransferase that methylates adenosine residues of some mRNAs. N6-methyladenosine (m6A), which is present at internal sites of some mRNAs, may play a role in the efficiency of mRNA splicing, transport or translation. This chain is Putative N(6)-adenosine-methyltransferase MT-A70-like, found in Medicago truncatula (Barrel medic).